The chain runs to 512 residues: Matrix metalloproteinase-27 (512 aa).

Positions 1 to 17 (MKSFLLLFLLFVTFSSA) are cleaved as a signal peptide. The propeptide at 18–98 (LPADQKMENE…PRCGVPDVGQ (81 aa)) is activation peptide. The short motif at 89–96 (PRCGVPDV) is the Cysteine switch element. Cysteine 91 contributes to the Zn(2+) binding site. N-linked (GlcNAc...) asparagine glycosylation is present at asparagine 110. The Ca(2+) site is built by aspartate 121 and aspartate 155. Histidine 165 contacts Zn(2+). Positions 173, 174, and 178 each coordinate Ca(2+). Histidine 181 contacts Zn(2+). Residues glycine 188 and aspartate 192 each contribute to the Ca(2+) site. Residue histidine 194 participates in Zn(2+) binding. Ca(2+) is bound by residues aspartate 196 and glutamate 199. Histidine 216 contacts Zn(2+). The active site involves glutamate 217. Residues histidine 220 and histidine 226 each coordinate Zn(2+). 4 Hemopexin repeats span residues 276–325 (PHAC…WPSL), 326–371 (PADL…GFPR), 373–421 (VKKI…FPGI), and 422–465 (GLRV…WFQC). Cysteine 279 and cysteine 465 are joined by a disulfide. Residue aspartate 286 participates in Ca(2+) binding. Residues aspartate 377 and aspartate 426 each coordinate Ca(2+). The required for retention in the endoplasmic reticulum stretch occupies residues 466–512 (KEPLNSSLDFHFNQEKAYSGEVETLHHQSLSLLIFGIVHLLNKICSY).

The protein belongs to the peptidase M10A family. Ca(2+) is required as a cofactor. Zn(2+) serves as cofactor. In terms of processing, N-glycosylated.

It is found in the endoplasmic reticulum. Matrix metalloproteinases degrade protein components of the extracellular matrix such as fibronectin, laminin, gelatins and/or collagens. The polypeptide is Matrix metalloproteinase-27 (MMP27) (Tupaia belangeri (Common tree shrew)).